Here is a 158-residue protein sequence, read N- to C-terminus: Transcription elongation factor GreA (158 aa).

A coiled-coil region spans residues 4–75 (EKTYPMTQEG…TQLENMIRNA (72 aa)).

The protein belongs to the GreA/GreB family.

Its function is as follows. Necessary for efficient RNA polymerase transcription elongation past template-encoded arresting sites. The arresting sites in DNA have the property of trapping a certain fraction of elongating RNA polymerases that pass through, resulting in locked ternary complexes. Cleavage of the nascent transcript by cleavage factors such as GreA or GreB allows the resumption of elongation from the new 3'terminus. GreA releases sequences of 2 to 3 nucleotides. The polypeptide is Transcription elongation factor GreA (Bacillus anthracis (strain A0248)).